A 656-amino-acid chain; its full sequence is Leucine aminopeptidase 2 (656 aa).

Substrate contacts are provided by residues 173-175 (QLE) and 302-307 (PYGGME). His-331 lines the Zn(2+) pocket. The active-site Proton acceptor is the Glu-332. 2 residues coordinate Zn(2+): His-335 and Glu-354. Residue Tyr-420 is the Proton donor of the active site.

Belongs to the peptidase M1 family. It depends on Zn(2+) as a cofactor.

The protein resides in the cytoplasm. The protein localises to the nucleus. The catalysed reaction is an epoxide + H2O = an ethanediol. In terms of biological role, aminopeptidase that preferentially cleaves di- and tripeptides. Also has low epoxide hydrolase activity (in vitro). Can hydrolyze the epoxide leukotriene LTA(4) but it forms preferentially 5,6-dihydroxy-7,9,11,14-eicosatetraenoic acid rather than the cytokine leukotriene B(4) as the product compared to the homologous mammalian enzyme (in vitro). This Vanderwaltozyma polyspora (strain ATCC 22028 / DSM 70294 / BCRC 21397 / CBS 2163 / NBRC 10782 / NRRL Y-8283 / UCD 57-17) (Kluyveromyces polysporus) protein is Leucine aminopeptidase 2.